The following is a 451-amino-acid chain: UPF0210 protein Asuc_1169 (451 aa).

Belongs to the UPF0210 family. In terms of assembly, homodimer.

The polypeptide is UPF0210 protein Asuc_1169 (Actinobacillus succinogenes (strain ATCC 55618 / DSM 22257 / CCUG 43843 / 130Z)).